Consider the following 483-residue polypeptide: Zinc metalloproteinase/disintegrin (483 aa).

A signal peptide spans 1-20 (MIQVLLVTVCLAVFPYQGSS). Residues 21-190 (IILESGNVND…KASQLYLTPE (170 aa)) constitute a propeptide that is removed on maturation. The Peptidase M12B domain maps to 197–395 (RYVKLAIVVD…YKPQCILNAP (199 aa)). 3 disulfide bridges follow: Cys-308–Cys-390, Cys-352–Cys-374, and Cys-354–Cys-357. His-333 is a binding site for Zn(2+). Glu-334 is a catalytic residue. Zn(2+) is bound by residues His-337 and His-343. Positions 396–411 (LRTDTVSTPVSGNELL) are excised as a propeptide. One can recognise a Disintegrin domain in the interval 403–483 (TPVSGNELLE…SDDCPRWNDL (81 aa)). 6 disulfide bridges follow: Cys-417–Cys-432, Cys-419–Cys-427, Cys-426–Cys-449, Cys-440–Cys-446, Cys-445–Cys-470, and Cys-458–Cys-477. The Cell attachment site signature appears at 462–464 (RGD).

It belongs to the venom metalloproteinase (M12B) family. P-II subfamily. P-IIa sub-subfamily. In terms of assembly, monomer. Zn(2+) serves as cofactor. In terms of tissue distribution, expressed by the venom gland.

The protein localises to the secreted. Functionally, impairs hemostasis in the envenomed animal. Its function is as follows. Inhibits ADP- and collagen-induced human platelet aggregation with IC(50) of 123 and 135 nM, respectively. Inhibits sperm-egg binding in a concentration-dependent manner, but has no effect on the fusion of sperm-egg. In Protobothrops jerdonii (Jerdon's pitviper), this protein is Zinc metalloproteinase/disintegrin.